We begin with the raw amino-acid sequence, 261 residues long: Cytochrome c oxidase subunit 3 (261 aa).

Topologically, residues 1-15 (MTHQTHAYHMVNPSP) are mitochondrial matrix. The chain crosses the membrane as a helical span at residues 16–34 (WPLTGALSALLMTSGLIMW). Topologically, residues 35–40 (FHFNST) are mitochondrial intermembrane. The helical transmembrane segment at 41–66 (ALLMLGLTTNMLTMYQWWRDIVREST) threads the bilayer. The Mitochondrial matrix segment spans residues 67-72 (FQGHHT). A helical membrane pass occupies residues 73-105 (PTVQKGLRYGMILFIISEVLFFTGFFWAFYHSS). Residues 106 to 128 (LAPTPELGGCWPPTGIHPLNPLE) lie on the Mitochondrial intermembrane side of the membrane. A helical transmembrane segment spans residues 129–152 (VPLLNTSVLLASGVSITWAHHSLM). At 153-155 (EGN) the chain is on the mitochondrial matrix side. A helical transmembrane segment spans residues 156–183 (RNHMLQALFITIALGVYFTLLQASEYYE). Residues 184–190 (APFTISD) lie on the Mitochondrial intermembrane side of the membrane. The helical transmembrane segment at 191-223 (GVYGSTFFVATGFHGLHVIIGSTFLIVCFFRQL) threads the bilayer. Residues 224 to 232 (KFHFTSNHH) lie on the Mitochondrial matrix side of the membrane. Residues 233–256 (FGFEAAAWYWHFVDVVWLFLYVSI) form a helical membrane-spanning segment. At 257-261 (YWWGS) the chain is on the mitochondrial intermembrane side.

Belongs to the cytochrome c oxidase subunit 3 family. Component of the cytochrome c oxidase (complex IV, CIV), a multisubunit enzyme composed of 14 subunits. The complex is composed of a catalytic core of 3 subunits MT-CO1, MT-CO2 and MT-CO3, encoded in the mitochondrial DNA, and 11 supernumerary subunits COX4I, COX5A, COX5B, COX6A, COX6B, COX6C, COX7A, COX7B, COX7C, COX8 and NDUFA4, which are encoded in the nuclear genome. The complex exists as a monomer or a dimer and forms supercomplexes (SCs) in the inner mitochondrial membrane with NADH-ubiquinone oxidoreductase (complex I, CI) and ubiquinol-cytochrome c oxidoreductase (cytochrome b-c1 complex, complex III, CIII), resulting in different assemblies (supercomplex SCI(1)III(2)IV(1) and megacomplex MCI(2)III(2)IV(2)).

The protein localises to the mitochondrion inner membrane. The enzyme catalyses 4 Fe(II)-[cytochrome c] + O2 + 8 H(+)(in) = 4 Fe(III)-[cytochrome c] + 2 H2O + 4 H(+)(out). Functionally, component of the cytochrome c oxidase, the last enzyme in the mitochondrial electron transport chain which drives oxidative phosphorylation. The respiratory chain contains 3 multisubunit complexes succinate dehydrogenase (complex II, CII), ubiquinol-cytochrome c oxidoreductase (cytochrome b-c1 complex, complex III, CIII) and cytochrome c oxidase (complex IV, CIV), that cooperate to transfer electrons derived from NADH and succinate to molecular oxygen, creating an electrochemical gradient over the inner membrane that drives transmembrane transport and the ATP synthase. Cytochrome c oxidase is the component of the respiratory chain that catalyzes the reduction of oxygen to water. Electrons originating from reduced cytochrome c in the intermembrane space (IMS) are transferred via the dinuclear copper A center (CU(A)) of subunit 2 and heme A of subunit 1 to the active site in subunit 1, a binuclear center (BNC) formed by heme A3 and copper B (CU(B)). The BNC reduces molecular oxygen to 2 water molecules using 4 electrons from cytochrome c in the IMS and 4 protons from the mitochondrial matrix. The protein is Cytochrome c oxidase subunit 3 (MT-CO3) of Cephalophorus natalensis (Natal red duiker).